Reading from the N-terminus, the 428-residue chain is MLKPEWSRYIDLLHKEVVPALGCTEPVAVALAAAHAAATLGRTPDRIEVKVSGNLLKNGMGVGVPGTGTTGMNIAAAVGALGGDPQRGLEVLAGLTPEQAEAGRQMVAEGRVDVSVAQGAPLLYAEVTVTGGGHTARSVLVHEHSNIVRLERDGETVFSVPVQDLSQGGVEEKWPLTMAAIHEFATQAPYDAIAFILEAARLNEAIAVEGLAREYGLKVGRTIDENIRKHLMSDDVSTLAVKLTAAASDARMAGVSLPVMSNSGSGNQGITCTMPVVAFAKRLESSDEELARALIMSHLTSIHMKHRLGRLSALCGATVAAAAAGCGIVLLMGGGMEQVDRTIRNMVGNVAGMICDGAKTGCAMKVASAVSAGVQSAMLAMDGIGIDRREGIVEDDIELCIANLARLGSDGMQEADRVVLDIMVSKKP.

This sequence belongs to the UPF0597 family.

This is UPF0597 protein Dde_0807 from Oleidesulfovibrio alaskensis (strain ATCC BAA-1058 / DSM 17464 / G20) (Desulfovibrio alaskensis).